A 535-amino-acid polypeptide reads, in one-letter code: Dimethylaniline monooxygenase [N-oxide-forming] 2 (535 aa).

An N-acetylalanine modification is found at alanine 2. Residues 9–13, glutamate 32, 40–41, and 61–62 contribute to the FAD site; these read GAGVS, VW, and NT. NADP(+) contacts are provided by residues 60-61 and 195-198; these read TN and SGSD. Lysine 492 participates in a covalent cross-link: Glycyl lysine isopeptide (Lys-Gly) (interchain with G-Cter in SUMO). A helical membrane pass occupies residues 510-530; sequence FSVSFLLKILGLLAVVVAFFC.

This sequence belongs to the FMO family. Requires FAD as cofactor. Mg(2+) serves as cofactor.

It is found in the microsome membrane. The protein localises to the endoplasmic reticulum membrane. Functionally, catalyzes the oxidative metabolism of numerous xenobiotics, including mainly therapeutic drugs and insecticides that contain a soft nucleophile, most commonly nitrogen and sulfur and participates to their bioactivation. The protein is Dimethylaniline monooxygenase [N-oxide-forming] 2 of Pan troglodytes (Chimpanzee).